Reading from the N-terminus, the 433-residue chain is ATP-dependent protease ATPase subunit HslU (433 aa).

ATP is bound by residues Ile18, 60–65, Asp246, Glu311, and Arg383; that span reads GVGKTE.

The protein belongs to the ClpX chaperone family. HslU subfamily. A double ring-shaped homohexamer of HslV is capped on each side by a ring-shaped HslU homohexamer. The assembly of the HslU/HslV complex is dependent on binding of ATP.

Its subcellular location is the cytoplasm. Functionally, ATPase subunit of a proteasome-like degradation complex; this subunit has chaperone activity. The binding of ATP and its subsequent hydrolysis by HslU are essential for unfolding of protein substrates subsequently hydrolyzed by HslV. HslU recognizes the N-terminal part of its protein substrates and unfolds these before they are guided to HslV for hydrolysis. This Cereibacter sphaeroides (strain ATCC 17029 / ATH 2.4.9) (Rhodobacter sphaeroides) protein is ATP-dependent protease ATPase subunit HslU.